The following is a 345-amino-acid chain: S-adenosylmethionine:tRNA ribosyltransferase-isomerase (345 aa).

It belongs to the QueA family. In terms of assembly, monomer.

It localises to the cytoplasm. It carries out the reaction 7-aminomethyl-7-carbaguanosine(34) in tRNA + S-adenosyl-L-methionine = epoxyqueuosine(34) in tRNA + adenine + L-methionine + 2 H(+). Its pathway is tRNA modification; tRNA-queuosine biosynthesis. Transfers and isomerizes the ribose moiety from AdoMet to the 7-aminomethyl group of 7-deazaguanine (preQ1-tRNA) to give epoxyqueuosine (oQ-tRNA). This is S-adenosylmethionine:tRNA ribosyltransferase-isomerase from Aromatoleum aromaticum (strain DSM 19018 / LMG 30748 / EbN1) (Azoarcus sp. (strain EbN1)).